A 117-amino-acid polypeptide reads, in one-letter code: Large ribosomal subunit protein eL34 (117 aa).

The protein belongs to the eukaryotic ribosomal protein eL34 family. Component of the large ribosomal subunit.

It is found in the cytoplasm. The protein resides in the cytosol. The protein localises to the endoplasmic reticulum. Its function is as follows. Component of the large ribosomal subunit. The ribosome is a large ribonucleoprotein complex responsible for the synthesis of proteins in the cell. The polypeptide is Large ribosomal subunit protein eL34 (rpl34) (Danio rerio (Zebrafish)).